The chain runs to 246 residues: 1-(5-phosphoribosyl)-5-[(5-phosphoribosylamino)methylideneamino] imidazole-4-carboxamide isomerase (246 aa).

D8 serves as the catalytic Proton acceptor. The active-site Proton donor is D131.

The protein belongs to the HisA/HisF family.

The protein resides in the cytoplasm. It carries out the reaction 1-(5-phospho-beta-D-ribosyl)-5-[(5-phospho-beta-D-ribosylamino)methylideneamino]imidazole-4-carboxamide = 5-[(5-phospho-1-deoxy-D-ribulos-1-ylimino)methylamino]-1-(5-phospho-beta-D-ribosyl)imidazole-4-carboxamide. The protein operates within amino-acid biosynthesis; L-histidine biosynthesis; L-histidine from 5-phospho-alpha-D-ribose 1-diphosphate: step 4/9. This chain is 1-(5-phosphoribosyl)-5-[(5-phosphoribosylamino)methylideneamino] imidazole-4-carboxamide isomerase, found in Albidiferax ferrireducens (strain ATCC BAA-621 / DSM 15236 / T118) (Rhodoferax ferrireducens).